Here is a 273-residue protein sequence, read N- to C-terminus: Mitochondrial distribution and morphology protein 12 (273 aa).

Positions 1–273 constitute an SMP-LTD domain; that stretch reads MSIDFDWSKL…LVWPSYITIE (273 aa). The segment at 124-145 is disordered; the sequence is LTSPIPESRPSTPMDNHQERDR.

It belongs to the MDM12 family. As to quaternary structure, component of the ER-mitochondria encounter structure (ERMES) or MDM complex, composed of mmm1, mdm10, mdm12 and mdm34. A mmm1 homodimer associates with one molecule of mdm12 on each side in a pairwise head-to-tail manner, and the SMP-LTD domains of mmm1 and mdm12 generate a continuous hydrophobic tunnel for phospholipid trafficking.

Its subcellular location is the mitochondrion outer membrane. It is found in the endoplasmic reticulum membrane. Functionally, component of the ERMES/MDM complex, which serves as a molecular tether to connect the endoplasmic reticulum (ER) and mitochondria. Components of this complex are involved in the control of mitochondrial shape and protein biogenesis, and function in nonvesicular lipid trafficking between the ER and mitochondria. Mdm12 is required for the interaction of the ER-resident membrane protein mmm1 and the outer mitochondrial membrane-resident beta-barrel protein mdm10. The mdm12-mmm1 subcomplex functions in the major beta-barrel assembly pathway that is responsible for biogenesis of all mitochondrial outer membrane beta-barrel proteins, and acts in a late step after the SAM complex. The mdm10-mdm12-mmm1 subcomplex further acts in the TOM40-specific pathway after the action of the mdm12-mmm1 complex. Essential for establishing and maintaining the structure of mitochondria and maintenance of mtDNA nucleoids. This Schizosaccharomyces pombe (strain 972 / ATCC 24843) (Fission yeast) protein is Mitochondrial distribution and morphology protein 12.